A 444-amino-acid chain; its full sequence is Homocysteine/cysteine synthase (444 aa).

Position 208 is an N6-(pyridoxal phosphate)lysine (K208).

The protein belongs to the trans-sulfuration enzymes family. In terms of assembly, homotetramer. Requires pyridoxal 5'-phosphate as cofactor.

The protein localises to the cytoplasm. It catalyses the reaction O-acetyl-L-homoserine + methanethiol = L-methionine + acetate + H(+). The catalysed reaction is O-acetyl-L-homoserine + hydrogen sulfide = L-homocysteine + acetate. The enzyme catalyses O-acetyl-L-serine + hydrogen sulfide = L-cysteine + acetate. The protein operates within amino-acid biosynthesis; L-methionine biosynthesis via de novo pathway; L-homocysteine from O-acetyl-L-homoserine. It participates in amino-acid biosynthesis; L-cysteine biosynthesis; L-cysteine from L-serine: step 2/2. Functionally, catalyzes the conversion of O-acetyl-L-homoserine (OAH) into homocysteine in the methionine biosynthesis pathway. Also catalyzes the conversion of O-acetylserine (OAS) into cysteine, the last step in the cysteine biosynthesis pathway. The protein is Homocysteine/cysteine synthase (MET17) of Kluyveromyces lactis (strain ATCC 8585 / CBS 2359 / DSM 70799 / NBRC 1267 / NRRL Y-1140 / WM37) (Yeast).